Here is a 118-residue protein sequence, read N- to C-terminus: uncharacterized protein (118 aa).

This is an uncharacterized protein from Aquifex aeolicus (strain VF5).